Reading from the N-terminus, the 334-residue chain is Ferredoxin--NADP reductase (334 aa).

Residues D33, Q41, Y46, A86, F120, D286, and T327 each contribute to the FAD site.

The protein belongs to the ferredoxin--NADP reductase type 2 family. Homodimer. It depends on FAD as a cofactor.

It catalyses the reaction 2 reduced [2Fe-2S]-[ferredoxin] + NADP(+) + H(+) = 2 oxidized [2Fe-2S]-[ferredoxin] + NADPH. The polypeptide is Ferredoxin--NADP reductase (Rickettsia massiliae (strain Mtu5)).